We begin with the raw amino-acid sequence, 444 residues long: tRNA modification GTPase MnmE (444 aa).

(6S)-5-formyl-5,6,7,8-tetrahydrofolate-binding residues include arginine 23, glutamate 82, and lysine 121. Residues 216–365 (GTSIVLAGLP…LKQALQKWLN (150 aa)) enclose the TrmE-type G domain. Asparagine 226 serves as a coordination point for K(+). GTP-binding positions include 226–231 (NAGKSS), 245–251 (TDIPGTT), and 270–273 (DSAG). Serine 230 serves as a coordination point for Mg(2+). The K(+) site is built by threonine 245, isoleucine 247, and threonine 250. Mg(2+) is bound at residue threonine 251. Lysine 444 contacts (6S)-5-formyl-5,6,7,8-tetrahydrofolate.

Belongs to the TRAFAC class TrmE-Era-EngA-EngB-Septin-like GTPase superfamily. TrmE GTPase family. As to quaternary structure, homodimer. Heterotetramer of two MnmE and two MnmG subunits. It depends on K(+) as a cofactor.

It localises to the cytoplasm. In terms of biological role, exhibits a very high intrinsic GTPase hydrolysis rate. Involved in the addition of a carboxymethylaminomethyl (cmnm) group at the wobble position (U34) of certain tRNAs, forming tRNA-cmnm(5)s(2)U34. In Chlamydia trachomatis serovar A (strain ATCC VR-571B / DSM 19440 / HAR-13), this protein is tRNA modification GTPase MnmE.